The primary structure comprises 233 residues: Fibrillarin-like rRNA/tRNA 2'-O-methyltransferase (233 aa).

S-adenosyl-L-methionine is bound by residues 89 to 90, 108 to 109, 133 to 134, and 153 to 156; these read TT, EF, DA, and DIAQ.

The protein belongs to the methyltransferase superfamily. Fibrillarin family. In terms of assembly, interacts with nop5. Component of box C/D small ribonucleoprotein (sRNP) particles that contain rpl7ae, FlpA and nop5, plus a guide RNA.

Its function is as follows. Involved in pre-rRNA and tRNA processing. Utilizes the methyl donor S-adenosyl-L-methionine to catalyze the site-specific 2'-hydroxyl methylation of ribose moieties in rRNA and tRNA. Site specificity is provided by a guide RNA that base pairs with the substrate. Methylation occurs at a characteristic distance from the sequence involved in base pairing with the guide RNA. In Sulfurisphaera tokodaii (strain DSM 16993 / JCM 10545 / NBRC 100140 / 7) (Sulfolobus tokodaii), this protein is Fibrillarin-like rRNA/tRNA 2'-O-methyltransferase.